The primary structure comprises 605 residues: MKKYLHILPACFLFYAAAHAQQKDTVYVTDFGAVPYSYENCVTQIQAAIDECKRTGAKVLSLPEGRYDIWPEGATRKEYYISNTSTEQECPSKVKTVGLMLHEIDDLTIEGNGATLMYHGKMTTIALEHCNGVRINNLHIDFERPAGSEIQYRKVTGGETEVTLHRDTRYEIVNGKIRLYGEGWRSNKNHCIEYDPDTESFTYSQGWNTLSASDAREIAPGIVRFNTPAEFMPKAGNTLTVRDIIRDQVGFFILESKNITLSRLQMHYMHGLGIVSQYTENITMDRVKCAPRPDSGRLLAASADMMHFSGCKGKVIIDSCYFAGAQDDPVNVHGTNLRALEKIDAQTLKLRFMHGQSYGFNAYFKGDTVAFIRAATMERFASATVRDVRRISDRIVEVRFDRDIPTSLELNHDCVENMTCTPEVEIRNSYFTRTSTRGTLVTTPRKVVIENNTYYKTGMSAILIEADAEGWYESGPVKDVLIKGNTFIDCAYNGGPGHAVIAIHPSNKIIDAERPVHQNIRIEDNTFRTFDYPVLYAKSTAGLLFRNNTIVRTETFPAASGNPYVFYLNGCKKAVIEGTVFKGETPRQSIKTENMKRKDLKTTIK.

A signal peptide spans 1–20 (MKKYLHILPACFLFYAAAHA). PbH1 repeat units follow at residues 256–278 (SKNI…VSQY), 312–334 (KGKV…NVHG), 421–443 (TPEV…LVTT), 444–466 (PRKV…LIEA), 477–507 (VKDV…HPSN), and 517–547 (HQNI…LFRN).

The protein belongs to the glycosyl hydrolase 110 family. A subfamily.

The enzyme catalyses Hydrolysis of terminal, non-reducing branched (1-&gt;3)-alpha-D-galactosidic residues, producing free D-galactose.. It carries out the reaction Hydrolysis of terminal, non-reducing alpha-D-galactose residues in alpha-D-galactosides, including galactose oligosaccharides, galactomannans and galactolipids.. Functionally, alpha-galactosidase that specifically removes branched alpha-1,3-linked galactose residues present in blood group B antigens. Has no activity toward linear alpha-1,3-linked galactose residues. The protein is Alpha-1,3-galactosidase A (glaA) of Bacteroides fragilis (strain YCH46).